We begin with the raw amino-acid sequence, 156 residues long: MNLNATLVAQMVVFFILWWVVAKFIWPPLVKALDERAKKIADGLAAADKGKAELELANKRVDQALTEARNEGAQRIADAEKRAQMTADEIKQNAQAEAARIIAQAKAEAEQQTVRARESLRDQVAVLAVKGAEQILKREVNAQVHADLLNQLKAEL.

A helical transmembrane segment spans residues Leu-7–Pro-27.

Belongs to the ATPase B chain family. As to quaternary structure, F-type ATPases have 2 components, F(1) - the catalytic core - and F(0) - the membrane proton channel. F(1) has five subunits: alpha(3), beta(3), gamma(1), delta(1), epsilon(1). F(0) has three main subunits: a(1), b(2) and c(10-14). The alpha and beta chains form an alternating ring which encloses part of the gamma chain. F(1) is attached to F(0) by a central stalk formed by the gamma and epsilon chains, while a peripheral stalk is formed by the delta and b chains.

The protein resides in the cell inner membrane. F(1)F(0) ATP synthase produces ATP from ADP in the presence of a proton or sodium gradient. F-type ATPases consist of two structural domains, F(1) containing the extramembraneous catalytic core and F(0) containing the membrane proton channel, linked together by a central stalk and a peripheral stalk. During catalysis, ATP synthesis in the catalytic domain of F(1) is coupled via a rotary mechanism of the central stalk subunits to proton translocation. In terms of biological role, component of the F(0) channel, it forms part of the peripheral stalk, linking F(1) to F(0). In Ralstonia pickettii (strain 12J), this protein is ATP synthase subunit b.